A 372-amino-acid chain; its full sequence is Glutamate 5-kinase (372 aa).

Lysine 14 serves as a coordination point for ATP. 3 residues coordinate substrate: serine 54, aspartate 141, and asparagine 153. 173–174 provides a ligand contact to ATP; it reads TD. A PUA domain is found at 280-358; the sequence is RGTLVLDDGA…DAIEALLGYV (79 aa).

It belongs to the glutamate 5-kinase family.

It is found in the cytoplasm. It carries out the reaction L-glutamate + ATP = L-glutamyl 5-phosphate + ADP. The protein operates within amino-acid biosynthesis; L-proline biosynthesis; L-glutamate 5-semialdehyde from L-glutamate: step 1/2. Functionally, catalyzes the transfer of a phosphate group to glutamate to form L-glutamate 5-phosphate. This is Glutamate 5-kinase from Pseudomonas aeruginosa (strain UCBPP-PA14).